The following is a 184-amino-acid chain: Lipoprotein signal peptidase (184 aa).

Transmembrane regions (helical) follow at residues 23 to 43 (FLYY…FQVF), 88 to 108 (PGLV…FLVF), and 110 to 130 (TSYN…GNFF). Catalysis depends on residues aspartate 142 and aspartate 157. The chain crosses the membrane as a helical span at residues 156-176 (ADCCITFSFIGLFLSFLIQFF).

It belongs to the peptidase A8 family.

The protein resides in the cell membrane. It catalyses the reaction Release of signal peptides from bacterial membrane prolipoproteins. Hydrolyzes -Xaa-Yaa-Zaa-|-(S,diacylglyceryl)Cys-, in which Xaa is hydrophobic (preferably Leu), and Yaa (Ala or Ser) and Zaa (Gly or Ala) have small, neutral side chains.. The protein operates within protein modification; lipoprotein biosynthesis (signal peptide cleavage). Its function is as follows. This protein specifically catalyzes the removal of signal peptides from prolipoproteins. This Mycoplasma pneumoniae (strain ATCC 29342 / M129 / Subtype 1) (Mycoplasmoides pneumoniae) protein is Lipoprotein signal peptidase.